A 353-amino-acid polypeptide reads, in one-letter code: DNA polymerase IV (353 aa).

One can recognise a UmuC domain in the interval 14–198; that stretch reads IIHIDMDAFF…MDISKFHGVG (185 aa). The Mg(2+) site is built by aspartate 18 and aspartate 116. The active site involves glutamate 117.

Belongs to the DNA polymerase type-Y family. Monomer. Mg(2+) is required as a cofactor.

It localises to the cytoplasm. It catalyses the reaction DNA(n) + a 2'-deoxyribonucleoside 5'-triphosphate = DNA(n+1) + diphosphate. Functionally, poorly processive, error-prone DNA polymerase involved in untargeted mutagenesis. Copies undamaged DNA at stalled replication forks, which arise in vivo from mismatched or misaligned primer ends. These misaligned primers can be extended by PolIV. Exhibits no 3'-5' exonuclease (proofreading) activity. May be involved in translesional synthesis, in conjunction with the beta clamp from PolIII. This chain is DNA polymerase IV, found in Streptococcus pneumoniae serotype 2 (strain D39 / NCTC 7466).